Consider the following 333-residue polypeptide: Fructose-1,6-bisphosphatase class 1 (333 aa).

Mg(2+) is bound by residues Glu-92, Asp-113, Leu-115, and Asp-116. Residues 116-119 (DGSS), Asn-209, Tyr-242, and Lys-272 each bind substrate. Glu-278 lines the Mg(2+) pocket.

Belongs to the FBPase class 1 family. As to quaternary structure, homotetramer. Mg(2+) serves as cofactor.

The protein resides in the cytoplasm. It carries out the reaction beta-D-fructose 1,6-bisphosphate + H2O = beta-D-fructose 6-phosphate + phosphate. Its pathway is carbohydrate biosynthesis; Calvin cycle. This chain is Fructose-1,6-bisphosphatase class 1, found in Chlorobium luteolum (strain DSM 273 / BCRC 81028 / 2530) (Pelodictyon luteolum).